Reading from the N-terminus, the 224-residue chain is Deoxyguanosine kinase (224 aa).

Position 8-16 (8-16 (GPIGAGKSS)) interacts with ATP. Glu-32, Tyr-44, and Gln-55 together coordinate substrate. The active-site Proton acceptor is the Asp-78. Residues Arg-79, Asp-84, and Glu-149 each coordinate substrate.

Belongs to the DCK/DGK family. As to quaternary structure, heterodimer of a deoxyadenosine (DAK) and a deoxyguanosine kinase (DGK).

The enzyme catalyses 2'-deoxyguanosine + ATP = dGMP + ADP + H(+). Its function is as follows. DGK/DAK plays an essential role in generating the deoxyribonucleotide precursors, dGTP and dATP, for DNA metabolism. This Lactobacillus johnsonii (strain CNCM I-12250 / La1 / NCC 533) protein is Deoxyguanosine kinase.